The sequence spans 364 residues: Alanine racemase (364 aa).

K35 functions as the Proton acceptor; specific for D-alanine in the catalytic mechanism. K35 bears the N6-(pyridoxal phosphate)lysine mark. Substrate is bound at residue R130. The active-site Proton acceptor; specific for L-alanine is Y256. Substrate is bound at residue M304.

It belongs to the alanine racemase family. It depends on pyridoxal 5'-phosphate as a cofactor.

It carries out the reaction L-alanine = D-alanine. It functions in the pathway amino-acid biosynthesis; D-alanine biosynthesis; D-alanine from L-alanine: step 1/1. Catalyzes the interconversion of L-alanine and D-alanine. May also act on other amino acids. In Polaromonas sp. (strain JS666 / ATCC BAA-500), this protein is Alanine racemase (alr).